Consider the following 434-residue polypeptide: Trehalose-phosphatase (434 aa).

Residues D156 and D158 each coordinate Mg(2+). D158 functions as the Proton donor/acceptor in the catalytic mechanism. Substrate is bound at residue 275 to 277 (QKK). Residue D366 participates in Mg(2+) binding.

This sequence belongs to the gob-1 trehalose phosphatase family. The cofactor is Mg(2+).

It carries out the reaction alpha,alpha-trehalose 6-phosphate + H2O = alpha,alpha-trehalose + phosphate. Catalyzes the hydrolysis of trehalose 6-phosphate to trehalose and phosphate; prevents the accumulation of toxic levels of trehalose 6-phosphate. This chain is Trehalose-phosphatase (gob-1), found in Caenorhabditis briggsae.